Consider the following 514-residue polypeptide: Cytochrome P450 monooxygenase verB (514 aa).

A helical transmembrane segment spans residues 5–25 (WLSASVLITAVILLVDYLNYY). C457 is a binding site for heme.

It belongs to the cytochrome P450 family. The cofactor is heme.

Its subcellular location is the membrane. It functions in the pathway mycotoxin biosynthesis. Its function is as follows. Cytochrome P450 monooxygenase; part of the gene cluster that mediates the biosynthesis of 11'-deoxyverticillin A, one of the dimeric epipolythiodioxopiperazines (ETPs) from the verticillin family that act as mycotoxins. 11'-deoxyverticillin A is required for normal conidiation. The nonribosomal peptide synthetase verP is speculated to be responsible for condensation of amino acids to form the carbon skeleton of verticillin, whereas the cluster-specific tailoring enzymes are involved in further modifications leading to the production of 11'-deoxyverticillin A. This Clonostachys rogersoniana protein is Cytochrome P450 monooxygenase verB.